Here is a 162-residue protein sequence, read N- to C-terminus: Ecotin (162 aa).

Residues 1 to 18 (MKMFVPAVVFAASASAWA) form the signal peptide. A disulfide bridge links cysteine 70 with cysteine 107.

The protein belongs to the protease inhibitor I11 (ecotin) family. Homodimer.

It is found in the periplasm. Its function is as follows. General inhibitor of pancreatic serine proteases: inhibits chymotrypsin, trypsin, elastases, factor X, kallikrein as well as a variety of other proteases. This chain is Ecotin, found in Salmonella arizonae (strain ATCC BAA-731 / CDC346-86 / RSK2980).